The sequence spans 195 residues: Phosphoheptose isomerase (195 aa).

One can recognise an SIS domain in the interval 37 to 195 (ISDSFKQHGK…IEFEMAKIRQ (159 aa)). 52-54 (NGG) is a binding site for substrate. Residues His-61 and Glu-65 each coordinate Zn(2+). Substrate contacts are provided by residues Glu-65, 93-94 (ND), 119-121 (STS), Ser-124, and Gln-172. Residues Gln-172 and His-180 each contribute to the Zn(2+) site.

Belongs to the SIS family. GmhA subfamily. As to quaternary structure, homotetramer. Zn(2+) is required as a cofactor.

It localises to the cytoplasm. The enzyme catalyses 2 D-sedoheptulose 7-phosphate = D-glycero-alpha-D-manno-heptose 7-phosphate + D-glycero-beta-D-manno-heptose 7-phosphate. It participates in carbohydrate biosynthesis; D-glycero-D-manno-heptose 7-phosphate biosynthesis; D-glycero-alpha-D-manno-heptose 7-phosphate and D-glycero-beta-D-manno-heptose 7-phosphate from sedoheptulose 7-phosphate: step 1/1. Its function is as follows. Catalyzes the isomerization of sedoheptulose 7-phosphate in D-glycero-D-manno-heptose 7-phosphate. In Histophilus somni (strain 2336) (Haemophilus somnus), this protein is Phosphoheptose isomerase.